A 311-amino-acid polypeptide reads, in one-letter code: Methionyl-tRNA formyltransferase (311 aa).

A (6S)-5,6,7,8-tetrahydrofolate-binding site is contributed by 112–115 (SLLP).

It belongs to the Fmt family.

The enzyme catalyses L-methionyl-tRNA(fMet) + (6R)-10-formyltetrahydrofolate = N-formyl-L-methionyl-tRNA(fMet) + (6S)-5,6,7,8-tetrahydrofolate + H(+). Attaches a formyl group to the free amino group of methionyl-tRNA(fMet). The formyl group appears to play a dual role in the initiator identity of N-formylmethionyl-tRNA by promoting its recognition by IF2 and preventing the misappropriation of this tRNA by the elongation apparatus. In Rhizobium leguminosarum bv. trifolii (strain WSM2304), this protein is Methionyl-tRNA formyltransferase.